Here is a 522-residue protein sequence, read N- to C-terminus: F-box-like/WD repeat-containing protein TBL1XR1-B (522 aa).

In terms of domain architecture, LisH spans 4–36 (SSDEVNFLVYRYLQESGFSHSAFTFGIESHISQ). Positions 41–86 (GALVPPAALISIIQKGLQYVEAEVSINEDGTLFDGRPIESLSLIDA) constitute an F-box-like domain. The tract at residues 122-150 (ATSANNQQPPAKNGESTANGEENGGHALA) is disordered. The segment covering 123–141 (TSANNQQPPAKNGESTANG) has biased composition (polar residues). 8 WD repeats span residues 175–214 (GHES…TSGS), 231–270 (PSNK…ASTL), 272–311 (QHKG…AKQQ), 314–352 (FHSA…PIKT), 355–394 (GHTN…CVHD), 397–445 (AHNK…CIHT), 448–487 (KHQE…LVHS), and 489–522 (RGTG…DLRK).

The protein belongs to the WD repeat EBI family. In terms of assembly, interacts with heterodimers of rxra and thrb, and this interaction is abrogated by thyroid hormone binding to thrb. Interacts with ncor1.

It localises to the nucleus. In terms of biological role, F-box-like protein which acts as an integral component of the N-CoR transcriptional corepressor complex. Probably regulates transcription activation mediated by nuclear receptors. May mediate the recruitment of the 19S proteasome complex, leading to the subsequent proteasomal degradation of the N-CoR complex, thereby allowing cofactor exchange and transcription activation. The polypeptide is F-box-like/WD repeat-containing protein TBL1XR1-B (tbl1xr1-b) (Xenopus laevis (African clawed frog)).